We begin with the raw amino-acid sequence, 269 residues long: Chymotrypsin-like elastase family member 2A (269 aa).

Positions M1–S16 are cleaved as a signal peptide. The propeptide at C17 to R28 is activation peptide. The Peptidase S1 domain maps to V29–E267. The cysteines at positions 58 and 74 are disulfide-linked. Catalysis depends on charge relay system residues H73 and D121. 3 disulfide bridges follow: C155–C222, C186–C202, and C212–C243. S216 acts as the Charge relay system in catalysis.

The protein belongs to the peptidase S1 family. Elastase subfamily. In terms of assembly, interacts with CPA1. Interacts with SERPINA1. As to expression, pancreas.

Its subcellular location is the secreted. It catalyses the reaction Preferential cleavage: Leu-|-Xaa, Met-|-Xaa and Phe-|-Xaa. Hydrolyzes elastin.. Elastase that enhances insulin signaling and might have a physiologic role in cellular glucose metabolism. Circulates in plasma and reduces platelet hyperactivation, triggers both insulin secretion and degradation, and increases insulin sensitivity. The protein is Chymotrypsin-like elastase family member 2A (CELA2A) of Bos taurus (Bovine).